The following is a 346-amino-acid chain: 4-hydroxy-2-oxovalerate aldolase (346 aa).

A Pyruvate carboxyltransferase domain is found at 8–260; it reads VTVHDMTLRD…ETGVDVFKIQ (253 aa). Position 16–17 (16–17) interacts with substrate; it reads RD. Asp-17 provides a ligand contact to Mn(2+). The active-site Proton acceptor is His-20. 2 residues coordinate substrate: Ser-170 and His-199. The Mn(2+) site is built by His-199 and His-201. Tyr-290 is a binding site for substrate.

Belongs to the 4-hydroxy-2-oxovalerate aldolase family.

The catalysed reaction is (S)-4-hydroxy-2-oxopentanoate = acetaldehyde + pyruvate. This Polaromonas naphthalenivorans (strain CJ2) protein is 4-hydroxy-2-oxovalerate aldolase.